We begin with the raw amino-acid sequence, 147 residues long: Ribosomal RNA large subunit methyltransferase H (147 aa).

S-adenosyl-L-methionine contacts are provided by residues Leu66, Gly95, and 114–119 (LSELTF).

It belongs to the RNA methyltransferase RlmH family. As to quaternary structure, homodimer.

It localises to the cytoplasm. It catalyses the reaction pseudouridine(1915) in 23S rRNA + S-adenosyl-L-methionine = N(3)-methylpseudouridine(1915) in 23S rRNA + S-adenosyl-L-homocysteine + H(+). Functionally, specifically methylates the pseudouridine at position 1915 (m3Psi1915) in 23S rRNA. This Synechococcus sp. (strain RCC307) protein is Ribosomal RNA large subunit methyltransferase H.